We begin with the raw amino-acid sequence, 237 residues long: Purine nucleoside phosphorylase DeoD-type (237 aa).

His4 is an a purine D-ribonucleoside binding site. Phosphate contacts are provided by residues Gly20, Arg24, Arg43, and 87–90 (RVGT). A purine D-ribonucleoside-binding positions include 179 to 181 (EME) and 203 to 204 (SD). The active-site Proton donor is the Asp204.

It belongs to the PNP/UDP phosphorylase family. As to quaternary structure, homohexamer; trimer of homodimers.

It carries out the reaction a purine D-ribonucleoside + phosphate = a purine nucleobase + alpha-D-ribose 1-phosphate. The catalysed reaction is a purine 2'-deoxy-D-ribonucleoside + phosphate = a purine nucleobase + 2-deoxy-alpha-D-ribose 1-phosphate. Functionally, catalyzes the reversible phosphorolytic breakdown of the N-glycosidic bond in the beta-(deoxy)ribonucleoside molecules, with the formation of the corresponding free purine bases and pentose-1-phosphate. In Streptococcus pyogenes serotype M5 (strain Manfredo), this protein is Purine nucleoside phosphorylase DeoD-type.